The primary structure comprises 125 residues: Large ribosomal subunit protein bL17 (125 aa).

This sequence belongs to the bacterial ribosomal protein bL17 family. In terms of assembly, part of the 50S ribosomal subunit. Contacts protein L32.

This Blochmanniella pennsylvanica (strain BPEN) protein is Large ribosomal subunit protein bL17.